The chain runs to 335 residues: Fructose-1,6-bisphosphatase class 1 (335 aa).

E92, D114, L116, and D117 together coordinate Mg(2+). Residues 117–120 (DGSS), N209, and K275 contribute to the substrate site. E281 is a binding site for Mg(2+).

It belongs to the FBPase class 1 family. In terms of assembly, homotetramer. The cofactor is Mg(2+).

The protein resides in the cytoplasm. It catalyses the reaction beta-D-fructose 1,6-bisphosphate + H2O = beta-D-fructose 6-phosphate + phosphate. Its pathway is carbohydrate biosynthesis; gluconeogenesis. The protein is Fructose-1,6-bisphosphatase class 1 of Verminephrobacter eiseniae (strain EF01-2).